Here is a 459-residue protein sequence, read N- to C-terminus: Alcohol acyl transferase 1 allele GSd (459 aa).

Residues His164 and Asn385 each act as proton acceptor in the active site.

Belongs to the plant acyltransferase family. In terms of tissue distribution, expressed at very low levels in the cortex and skin of ripe fruit.

Functionally, involved in the biosynthesis of volatile esters which confer ripe apple fruit flavor. Alcohol acyl transferase that can use a wide range of alcohols as substrate to produce esters. The polypeptide is Alcohol acyl transferase 1 allele GSd (Malus domestica (Apple)).